We begin with the raw amino-acid sequence, 121 residues long: MDPNTVSSFQDILMRMSKMQLESSSEDLNGMITQFESLKLYRDSLGEAVMRMGDLHSLQNRNGKWREQLGQKFEEIRWLIEEVRHRLKITENSFEQITFMQALQLLFEVEQEIRTFSFQLI.

2 consecutive short sequence motifs (nuclear export signal) follow at residues 12–21 (ILMRMSKMQL) and 85–94 (HRLKITENSF).

This sequence belongs to the influenza viruses NEP family. In terms of assembly, interacts with protein M1. May interact with host nucleoporin RAB/HRB and exportin XPO1/CRM1.

It localises to the virion. It is found in the host nucleus. Its function is as follows. Mediates the nuclear export of encapsidated genomic RNAs (ribonucleoproteins, RNPs). Acts as an adapter between viral RNPs complexes and the nuclear export machinery of the cell. Possesses no intrinsic RNA-binding activity, but includes a C-terminal M1-binding domain. This domain is believed to allow recognition of RNPs bound to the protein M1. Since protein M1 is not available in large quantities before late stages of infection, such an indirect recognition mechanism probably ensures that genomic RNPs are not exported from the host nucleus until sufficient quantities of viral mRNA and progeny genomic RNA have been synthesized. Furthermore, the RNPs enter the host cytoplasm only when associated with the M1 protein that is necessary to guide them to the plasma membrane. May down-regulate viral RNA synthesis when overproduced. The protein is Nuclear export protein of Influenza A virus (strain A/Hickox/1940 H1N1).